Consider the following 256-residue polypeptide: GDSL esterase/lipase CPRD49 (256 aa).

A signal peptide spans 1 to 27 (MVGPARPQIVLFGSSIVQMSFGHGGWG). The Nucleophile role is filled by serine 15. Residues asparagine 49 and asparagine 79 are each glycosylated (N-linked (GlcNAc...) asparagine). Residue histidine 213 is part of the active site. N-linked (GlcNAc...) asparagine glycosylation is present at asparagine 243.

It belongs to the 'GDSL' lipolytic enzyme family. In terms of tissue distribution, specifically expressed in anthers (stages 8-12).

The protein resides in the secreted. The polypeptide is GDSL esterase/lipase CPRD49 (CPRD49) (Arabidopsis thaliana (Mouse-ear cress)).